A 76-amino-acid chain; its full sequence is Serine proteinase inhibitor IA-1 (76 aa).

The residue at position 1 (S1) is an N-acetylserine.

Belongs to the protease inhibitor I9 family.

Its function is as follows. Specifically inhibits an endogenous intracellular serine proteinase (proteinase A). The chain is Serine proteinase inhibitor IA-1 from Pleurotus ostreatus (Oyster mushroom).